Reading from the N-terminus, the 146-residue chain is Leghemoglobin 49 (146 aa).

A Globin domain is found at 2–146 (GFTQQQEALV…LATAIKKAMS (145 aa)). 2 positions are modified to nitrated tyrosine: tyrosine 24 and tyrosine 29. Position 44 (serine 44) interacts with heme b. Serine 44 bears the Phosphoserine mark. Histidine 61 contacts O2. Heme b is bound by residues histidine 93 and lysine 96. Nitrated tyrosine is present on tyrosine 134.

Belongs to the plant globin family. As to quaternary structure, monomer. Nitrated in effective nodules and particularly in hypoxic conditions; this mechanism may play a protective role in the symbiosis by buffering toxic peroxynitrite NO(2)(-). Nitration level decrease during nodule senescence. In terms of processing, phosphorylation at Ser-44 disrupts the molecular environment of its porphyrin ring oxygen binding pocket, thus leading to a reduced oxygen consumption and to the delivery of oxygen O(2) to symbiosomes. In terms of tissue distribution, accumulates in root nodules after inoculation by bacteria of the genus Rhizobium.

The protein localises to the cytoplasm. The protein resides in the cytosol. Its subcellular location is the nucleus. Leghemoglobin that reversibly binds oxygen O(2) through a pentacoordinated heme iron. In root nodules, facilitates the diffusion of oxygen to the bacteroids while preventing the bacterial nitrogenase from being inactivated by buffering dioxygen, nitric oxide and carbon monoxide, and promoting the formation of reactive oxygen species (ROS, e.g. H(2)O(2)). This role is essential for symbiotic nitrogen fixation (SNF). The sequence is that of Leghemoglobin 49 from Vicia faba (Broad bean).